Consider the following 245-residue polypeptide: 1-(5-phosphoribosyl)-5-[(5-phosphoribosylamino)methylideneamino] imidazole-4-carboxamide isomerase (245 aa).

The active-site Proton acceptor is aspartate 7. Aspartate 129 functions as the Proton donor in the catalytic mechanism.

This sequence belongs to the HisA/HisF family.

It is found in the cytoplasm. It carries out the reaction 1-(5-phospho-beta-D-ribosyl)-5-[(5-phospho-beta-D-ribosylamino)methylideneamino]imidazole-4-carboxamide = 5-[(5-phospho-1-deoxy-D-ribulos-1-ylimino)methylamino]-1-(5-phospho-beta-D-ribosyl)imidazole-4-carboxamide. The protein operates within amino-acid biosynthesis; L-histidine biosynthesis; L-histidine from 5-phospho-alpha-D-ribose 1-diphosphate: step 4/9. The protein is 1-(5-phosphoribosyl)-5-[(5-phosphoribosylamino)methylideneamino] imidazole-4-carboxamide isomerase of Vibrio vulnificus (strain CMCP6).